The sequence spans 294 residues: MAIPTETQHQEKEASDASAAAAQKRWTLSDFDIGKPLGRGKFGHVYLAREKRSNHVVALKVLFKSQLQQSQVEHQLRREVEIQSHLRHPNILRLYGYFYDQKRVYLILEYAARGELYKDLQKCKYFSERRAATYVASLARALIYCHGKHVIHRDIKPENLLIGAQGELKIADFGWSVHTFNRRRTMCGTLDYLPPEMVESVEHDASVDIWSLGILCYEFLYGVPPFEAMEHSDTYRRIVQVDLKFPPKPIISASAKDLISQMLVKESSQRLPLHKLLEHPWIVQNADPSGIYRV.

Residues 31–282 enclose the Protein kinase domain; sequence FDIGKPLGRG…LHKLLEHPWI (252 aa). ATP contacts are provided by residues 37–45 and Lys-60; that span reads LGRGKFGHV. The active-site Proton acceptor is the Asp-154. Ser-176 carries the phosphoserine modification. Thr-185 carries the post-translational modification Phosphothreonine.

This sequence belongs to the protein kinase superfamily. Ser/Thr protein kinase family. Aurora subfamily. Interacts with TPX2. Phosphorylation at Thr-185 may regulate activity and degradation of AUR1 in a cell cycle dependent manner. As to expression, abundant in roots, flowers and flower buds, low or absent in expanded leaves, stems and siliques.

The protein resides in the nucleus membrane. It is found in the cytoplasm. It localises to the cytoskeleton. The protein localises to the spindle. Its subcellular location is the spindle pole. The protein resides in the phragmoplast. It catalyses the reaction L-seryl-[protein] + ATP = O-phospho-L-seryl-[protein] + ADP + H(+). The catalysed reaction is L-threonyl-[protein] + ATP = O-phospho-L-threonyl-[protein] + ADP + H(+). Its function is as follows. Phosphorylates specifically 'Ser-10' of histone H3 in vitro and colocalizes with phosphorylated histone H3 during mitosis. Associates with cytoskeletal structures that are necessary for cytokinesis and with the microtubule spindle. Also colocalizes with gamma-tubulin and function in microtubule organizing centers (MTOCs). In contrast with the mammalian B-type Aurora, AUR1 has no kinase activity toward 'Ser-28' of histone H3. In Arabidopsis thaliana (Mouse-ear cress), this protein is Serine/threonine-protein kinase Aurora-1 (AUR1).